Here is a 226-residue protein sequence, read N- to C-terminus: Urease accessory protein UreF (226 aa).

It belongs to the UreF family. In terms of assembly, ureD, UreF and UreG form a complex that acts as a GTP-hydrolysis-dependent molecular chaperone, activating the urease apoprotein by helping to assemble the nickel containing metallocenter of UreC. The UreE protein probably delivers the nickel.

The protein localises to the cytoplasm. In terms of biological role, required for maturation of urease via the functional incorporation of the urease nickel metallocenter. This is Urease accessory protein UreF from Nitrosospira multiformis (strain ATCC 25196 / NCIMB 11849 / C 71).